The following is an 84-amino-acid chain: uncharacterized protein (84 aa).

2 stretches are compositionally biased toward basic residues: residues 1–15 (MPPH…HGHH) and 67–84 (HHGH…GHFF). Disordered regions lie at residues 1–22 (MPPH…TYTT) and 64–84 (TSHH…GHFF).

This is an uncharacterized protein from Dictyostelium discoideum (Social amoeba).